The following is a 192-amino-acid chain: NADH:FMN oxidoreductase (192 aa).

The interval 1-20 is disordered; it reads MSDKPNAVSSHTTPDVPEVA. FMN is bound by residues 60-63, 77-84, Ala-111, and Arg-117; these read TATS and NIAETSSS.

The protein belongs to the non-flavoprotein flavin reductase family.

It is found in the cytoplasm. The catalysed reaction is FMNH2 + NAD(+) = FMN + NADH + 2 H(+). Its pathway is sulfur metabolism; dibenzothiophene degradation. In terms of biological role, an NADH:FMN oxidoreductase which supplies reduced FMN for the '4S' desulfurization pathway that removes covalently bound sulfur from dibenzothiophene (DBT) without breaking carbon-carbon bonds. Provides DszA and DszC (DBTO2-monooxygenase and DBT-monooxygenase respectively) with reduced flavin (FMN). The chain is NADH:FMN oxidoreductase from Rhodococcus erythropolis (Arthrobacter picolinophilus).